We begin with the raw amino-acid sequence, 320 residues long: Homeobox-leucine zipper protein HOX25 (320 aa).

The segment at residues A79–Q139 is a DNA-binding region (homeobox). Positions K138–N182 are leucine-zipper. 2 disordered regions span residues A181 to Q209 and D249 to S282. The segment covering S265–Y278 has biased composition (acidic residues).

Belongs to the HD-ZIP homeobox family. Class I subfamily. In terms of tissue distribution, expressed in roots, leaf sheaths and blades and panicles.

Its subcellular location is the nucleus. Functionally, probable transcription factor. The chain is Homeobox-leucine zipper protein HOX25 (HOX25) from Oryza sativa subsp. japonica (Rice).